The chain runs to 527 residues: Peptide chain release factor 3 (527 aa).

Residues Asp-9–Gln-278 form the tr-type G domain. GTP is bound by residues Ser-18–Thr-25, Asp-86–His-90, and Asn-140–Asp-143.

Belongs to the TRAFAC class translation factor GTPase superfamily. Classic translation factor GTPase family. PrfC subfamily.

Its subcellular location is the cytoplasm. Increases the formation of ribosomal termination complexes and stimulates activities of RF-1 and RF-2. It binds guanine nucleotides and has strong preference for UGA stop codons. It may interact directly with the ribosome. The stimulation of RF-1 and RF-2 is significantly reduced by GTP and GDP, but not by GMP. The sequence is that of Peptide chain release factor 3 from Shewanella denitrificans (strain OS217 / ATCC BAA-1090 / DSM 15013).